Here is a 258-residue protein sequence, read N- to C-terminus: MNSIDPRAIIDPSAKLADGVEVGPWSIVGPDVEIGEGTVIGPHVVLKGPTRIGKHNRIFQFSSIGEDTPDLKYKGEPTRLVIGDHNVIREGVTIHRGTVQDRAETTVGDHNLIMAYAHIGHDSVIGNHCILVNNTALAGHVHVGDWAILSGYTLVHQYCHIGAHAFSGMGTAIGKDVPAFVTVFGSPAEARSMNFEGMRRRGFSDEVIHVLRRCYKIVYRQGLTVEDALKELAEPAAQHPEVELFRQSIVSSARGITR.

This sequence belongs to the transferase hexapeptide repeat family. LpxA subfamily. In terms of assembly, homotrimer.

It is found in the cytoplasm. The enzyme catalyses a (3R)-hydroxyacyl-[ACP] + UDP-N-acetyl-alpha-D-glucosamine = a UDP-3-O-[(3R)-3-hydroxyacyl]-N-acetyl-alpha-D-glucosamine + holo-[ACP]. It participates in glycolipid biosynthesis; lipid IV(A) biosynthesis; lipid IV(A) from (3R)-3-hydroxytetradecanoyl-[acyl-carrier-protein] and UDP-N-acetyl-alpha-D-glucosamine: step 1/6. Its function is as follows. Involved in the biosynthesis of lipid A, a phosphorylated glycolipid that anchors the lipopolysaccharide to the outer membrane of the cell. This chain is Acyl-[acyl-carrier-protein]--UDP-N-acetylglucosamine O-acyltransferase, found in Pseudomonas putida (strain GB-1).